Consider the following 155-residue polypeptide: Aspartate carbamoyltransferase regulatory chain (155 aa).

The Zn(2+) site is built by cysteine 109, cysteine 114, cysteine 138, and cysteine 141.

The protein belongs to the PyrI family. As to quaternary structure, contains catalytic and regulatory chains. Requires Zn(2+) as cofactor.

Functionally, involved in allosteric regulation of aspartate carbamoyltransferase. This chain is Aspartate carbamoyltransferase regulatory chain, found in Vibrio cholerae serotype O1 (strain ATCC 39315 / El Tor Inaba N16961).